The sequence spans 142 residues: Peptide methionine sulfoxide reductase MsrB (142 aa).

Residues 2–125 (LKKDKSELTD…NSAAIQFIPY (124 aa)) enclose the MsrB domain. The active-site Nucleophile is the Cys114.

It belongs to the MsrB Met sulfoxide reductase family.

The enzyme catalyses L-methionyl-[protein] + [thioredoxin]-disulfide + H2O = L-methionyl-(R)-S-oxide-[protein] + [thioredoxin]-dithiol. This Staphylococcus aureus (strain USA300) protein is Peptide methionine sulfoxide reductase MsrB.